Consider the following 543-residue polypeptide: Exodeoxyribonuclease 7 large subunit (543 aa).

Residues 498–543 form a disordered region; sequence VTGEGDKASPPPQAASATTTPAPGRPNPLPKSPKKSEPPAGQGSLF.

It belongs to the XseA family. As to quaternary structure, heterooligomer composed of large and small subunits.

It localises to the cytoplasm. The catalysed reaction is Exonucleolytic cleavage in either 5'- to 3'- or 3'- to 5'-direction to yield nucleoside 5'-phosphates.. In terms of biological role, bidirectionally degrades single-stranded DNA into large acid-insoluble oligonucleotides, which are then degraded further into small acid-soluble oligonucleotides. The protein is Exodeoxyribonuclease 7 large subunit of Allorhizobium ampelinum (strain ATCC BAA-846 / DSM 112012 / S4) (Agrobacterium vitis (strain S4)).